The following is a 366-amino-acid chain: tRNA/tmRNA (uracil-C(5))-methyltransferase (366 aa).

5 residues coordinate S-adenosyl-L-methionine: Gln-187, Tyr-215, Asn-220, Glu-236, and Asp-297. Catalysis depends on Cys-322, which acts as the Nucleophile. Glu-356 serves as the catalytic Proton acceptor.

The protein belongs to the class I-like SAM-binding methyltransferase superfamily. RNA M5U methyltransferase family. TrmA subfamily.

The enzyme catalyses uridine(54) in tRNA + S-adenosyl-L-methionine = 5-methyluridine(54) in tRNA + S-adenosyl-L-homocysteine + H(+). It catalyses the reaction uridine(341) in tmRNA + S-adenosyl-L-methionine = 5-methyluridine(341) in tmRNA + S-adenosyl-L-homocysteine + H(+). Its function is as follows. Dual-specificity methyltransferase that catalyzes the formation of 5-methyluridine at position 54 (m5U54) in all tRNAs, and that of position 341 (m5U341) in tmRNA (transfer-mRNA). This chain is tRNA/tmRNA (uracil-C(5))-methyltransferase, found in Marinomonas sp. (strain MWYL1).